We begin with the raw amino-acid sequence, 357 residues long: UDP-N-acetylglucosamine--N-acetylmuramyl-(pentapeptide) pyrophosphoryl-undecaprenol N-acetylglucosamine transferase (357 aa).

UDP-N-acetyl-alpha-D-glucosamine-binding positions include 13–15 (SAG), arginine 166, serine 196, and glutamine 291.

This sequence belongs to the glycosyltransferase 28 family. MurG subfamily.

It is found in the cell membrane. It catalyses the reaction di-trans,octa-cis-undecaprenyl diphospho-N-acetyl-alpha-D-muramoyl-L-alanyl-D-glutamyl-meso-2,6-diaminopimeloyl-D-alanyl-D-alanine + UDP-N-acetyl-alpha-D-glucosamine = di-trans,octa-cis-undecaprenyl diphospho-[N-acetyl-alpha-D-glucosaminyl-(1-&gt;4)]-N-acetyl-alpha-D-muramoyl-L-alanyl-D-glutamyl-meso-2,6-diaminopimeloyl-D-alanyl-D-alanine + UDP + H(+). Its pathway is cell wall biogenesis; peptidoglycan biosynthesis. Its function is as follows. Cell wall formation. Catalyzes the transfer of a GlcNAc subunit on undecaprenyl-pyrophosphoryl-MurNAc-pentapeptide (lipid intermediate I) to form undecaprenyl-pyrophosphoryl-MurNAc-(pentapeptide)GlcNAc (lipid intermediate II). The sequence is that of UDP-N-acetylglucosamine--N-acetylmuramyl-(pentapeptide) pyrophosphoryl-undecaprenol N-acetylglucosamine transferase from Clostridium perfringens (strain ATCC 13124 / DSM 756 / JCM 1290 / NCIMB 6125 / NCTC 8237 / Type A).